The primary structure comprises 291 residues: Phosphatidylcholine-sterol acyltransferase (291 aa).

A glycan (N-linked (GlcNAc...) asparagine) is linked at N28. The Nucleophile role is filled by S125. N179 carries N-linked (GlcNAc...) asparagine glycosylation. A disulfide bond links C220 and C263. The Charge relay system role is filled by D252. A glycan (N-linked (GlcNAc...) asparagine) is linked at N280.

This sequence belongs to the AB hydrolase superfamily. Lipase family.

It localises to the secreted. The enzyme catalyses a sterol + a 1,2-diacyl-sn-glycero-3-phosphocholine = a sterol ester + a 1-acyl-sn-glycero-3-phosphocholine. With respect to regulation, APOA1 is the most potent activator in plasma. Also activated by APOE, APOC1 and APOA4. Functionally, central enzyme in the extracellular metabolism of plasma lipoproteins. Synthesized mainly in the liver and secreted into plasma where it converts cholesterol and phosphatidylcholines (lecithins) to cholesteryl esters and lysophosphatidylcholines on the surface of high and low density lipoproteins (HDLs and LDLs). The cholesterol ester is then transported back to the liver. Has a preference for plasma 16:0-18:2 or 18:O-18:2 phosphatidylcholines. Also produced in the brain by primary astrocytes, and esterifies free cholesterol on nascent APOE-containing lipoproteins secreted from glia and influences cerebral spinal fluid (CSF) APOE- and APOA1 levels. Together with APOE and the cholesterol transporter ABCA1, plays a key role in the maturation of glial-derived, nascent lipoproteins. Required for remodeling high-density lipoprotein particles into their spherical forms. The polypeptide is Phosphatidylcholine-sterol acyltransferase (LCAT) (Myodes glareolus (Bank vole)).